The chain runs to 335 residues: Zinc transporter ZIP11 (335 aa).

The next 7 helical transmembrane spans lie at 12–32 (LLGT…VFIF), 44–64 (LGFA…APAV), 72–92 (GFGA…AAFV), 187–207 (IALL…AVGV), 256–278 (FWYG…FAVV), 283–300 (VLPY…YVVM), and 315–335 (LASW…VGLG).

Belongs to the ZIP transporter (TC 2.A.5) family.

Its subcellular location is the cell membrane. The protein localises to the nucleus. It localises to the cytoplasm. It is found in the golgi apparatus. The enzyme catalyses Zn(2+)(in) = Zn(2+)(out). It catalyses the reaction Cu(2+)(in) = Cu(2+)(out). Zinc importer that regulates cytosolic zinc concentrations either via zinc influx from the extracellular compartment or efflux from intracellular organelles such as Golgi apparatus. May transport copper ions as well. The transport mechanism remains to be elucidated. The protein is Zinc transporter ZIP11 (Slc39a11) of Rattus norvegicus (Rat).